A 189-amino-acid chain; its full sequence is MQAFKKLTSSAIPLWLSDIDTDMIIPANFLTQTTKDGYGKSLFHNLKEKDSSFIFNNPDYSNSEILIAGDNFGCGSSREHAVWALTQAGIKVIIAPSFSDIFFNNAAKNGLLLISLDKDTVKELCDKAEDPKFSMTVDLQEQTVNVDGSIYSFDYDPFRKDCLIRGLDDMTYLIEHLDIIKQFEQSQRG.

It belongs to the LeuD family. LeuD type 1 subfamily. In terms of assembly, heterodimer of LeuC and LeuD.

The catalysed reaction is (2R,3S)-3-isopropylmalate = (2S)-2-isopropylmalate. The protein operates within amino-acid biosynthesis; L-leucine biosynthesis; L-leucine from 3-methyl-2-oxobutanoate: step 2/4. In terms of biological role, catalyzes the isomerization between 2-isopropylmalate and 3-isopropylmalate, via the formation of 2-isopropylmaleate. The sequence is that of 3-isopropylmalate dehydratase small subunit from Francisella philomiragia subsp. philomiragia (strain ATCC 25017 / CCUG 19701 / FSC 153 / O#319-036).